The following is a 194-amino-acid chain: Flagellar transcriptional regulator FlhC (194 aa).

Positions 139, 142, 159, and 162 each coordinate Zn(2+).

It belongs to the FlhC family. In terms of assembly, heterohexamer composed of two FlhC and four FlhD subunits. Each FlhC binds a FlhD dimer, forming a heterotrimer, and a hexamer assembles by dimerization of two heterotrimers. It depends on Zn(2+) as a cofactor.

Its subcellular location is the cytoplasm. In terms of biological role, functions in complex with FlhD as a master transcriptional regulator that regulates transcription of several flagellar and non-flagellar operons by binding to their promoter region. Activates expression of class 2 flagellar genes, including fliA, which is a flagellum-specific sigma factor that turns on the class 3 genes. Also regulates genes whose products function in a variety of physiological pathways. In Xenorhabdus nematophila (Achromobacter nematophilus), this protein is Flagellar transcriptional regulator FlhC.